The chain runs to 720 residues: Asp/Glu-specific dipeptidyl-peptidase (720 aa).

The N-terminal stretch at 1–21 is a signal peptide; it reads MKKRLLLPLFAALCLSQIAHA. C69 and C86 are oxidised to a cystine. Active-site charge relay system residues include H85, D227, and S655.

The protein belongs to the peptidase S46 family. In terms of assembly, homodimer.

The protein localises to the cell surface. Its activity is regulated as follows. Enzyme activity is completely blocked by diisopropyl-fluorophosphates, moderately by phenylmethylsulfonyl fluoride (PMSF) and 4-(2-methyl)benzenesulfonyl fluoride, and slightly by pepstatin in vitro. In terms of biological role, catalyzes the removal of dipeptides from the N-terminus of oligopeptides. Shows a strict specificity for acidic residues (Asp or Glu) in the P1 position, and has a hydrophobic residue preference at the P2 position. Preferentially cleaves the synthetic substrate Leu-Asp-methylcoumaryl-7-amide (Leu-Asp-MCA) as compared to Leu-Glu-MCA. Is involved in amino acid metabolism and bacterial growth of asaccharolytic P.gingivalis, that utilizes amino acids from extracellular proteinaceous nutrients as energy and carbon sources. In Porphyromonas gingivalis (strain ATCC 33277 / DSM 20709 / CIP 103683 / JCM 12257 / NCTC 11834 / 2561), this protein is Asp/Glu-specific dipeptidyl-peptidase.